A 263-amino-acid chain; its full sequence is Endonuclease 8 (263 aa).

Catalysis depends on P2, which acts as the Schiff-base intermediate with DNA. The active-site Proton donor is the E3. The active-site Proton donor; for beta-elimination activity is K53. DNA-binding residues include Q70, R125, and N169. The FPG-type zinc finger occupies 229-263 (KVFHRDGELCERCGGIIEKTTLSSRPFYWCPGCQH). R253 acts as the Proton donor; for delta-elimination activity in catalysis.

This sequence belongs to the FPG family. Requires Zn(2+) as cofactor.

It catalyses the reaction 2'-deoxyribonucleotide-(2'-deoxyribose 5'-phosphate)-2'-deoxyribonucleotide-DNA = a 3'-end 2'-deoxyribonucleotide-(2,3-dehydro-2,3-deoxyribose 5'-phosphate)-DNA + a 5'-end 5'-phospho-2'-deoxyribonucleoside-DNA + H(+). Involved in base excision repair of DNA damaged by oxidation or by mutagenic agents. Acts as a DNA glycosylase that recognizes and removes damaged bases. Has a preference for oxidized pyrimidines, such as thymine glycol, 5,6-dihydrouracil and 5,6-dihydrothymine. Has AP (apurinic/apyrimidinic) lyase activity and introduces nicks in the DNA strand. Cleaves the DNA backbone by beta-delta elimination to generate a single-strand break at the site of the removed base with both 3'- and 5'-phosphates. The polypeptide is Endonuclease 8 (Shigella dysenteriae serotype 1 (strain Sd197)).